We begin with the raw amino-acid sequence, 62 residues long: Potassium channel toxin kappa-KTx 3.2 (62 aa).

The N-terminal stretch at 1–26 is a signal peptide; the sequence is MKSTLMTASLLILVLLSIVDYASVYA. Positions 27–36 are excised as a propeptide; the sequence is ELIDSEISME. Cystine bridges form between Cys43-Cys61 and Cys47-Cys57.

This sequence belongs to the short scorpion toxin superfamily. Potassium channel inhibitor kappa-KTx family. Kappa-KTx 3 subfamily. As to expression, expressed by the venom gland.

The protein localises to the secreted. Its function is as follows. Potassium channel inhibitor (Kv). In Heterometrus petersii (Asian forest scorpion), this protein is Potassium channel toxin kappa-KTx 3.2.